Reading from the N-terminus, the 940-residue chain is Antiviral innate immune response receptor RIG-I (940 aa).

2 consecutive CARD domains span residues 1–87 (MTAE…GLCE) and 92–172 (WDFQ…KTLK). Residues Lys-48, Lys-96, Lys-154, Lys-164, Lys-172, and Lys-190 each participate in a glycyl lysine isopeptide (Lys-Gly) (interchain with G-Cter in ubiquitin) cross-link. Residues 219 to 928 (ENQNLSQNSC…LSFDAAEMAG (710 aa)) form an interaction with ZC3HAV1 region. In terms of domain architecture, Helicase ATP-binding spans 249–428 (ALPAQNGKNT…AEATEYICKL (180 aa)). 262–269 (APTGCGKT) is a binding site for ATP. The DECH box signature appears at 370–373 (DECH). The Helicase C-terminal domain occupies 613-779 (KLRDLCFILQ…ILQTWDEAVF (167 aa)). Positions 738–928 (GSKCFLLTAN…LSFDAAEMAG (191 aa)) are mediates interaction with RNF135. The residue at position 773 (Thr-773) is a Phosphothreonine; by CK2. The 134-residue stretch at 795-928 (DNQGKPEPVP…LSFDAAEMAG (134 aa)) folds into the RLR CTR domain. A Zn(2+)-binding site is contributed by Cys-813. A Glycyl lysine isopeptide (Lys-Gly) (interchain with G-Cter in ubiquitin) cross-link involves residue Lys-815. Position 816 (Cys-816) interacts with Zn(2+). Lys-861 carries the N6-acetyllysine modification. Residues Cys-867 and Cys-872 each contribute to the Zn(2+) site. The residue at position 912 (Lys-912) is an N6-acetyllysine.

The protein belongs to the helicase family. RLR subfamily. As to quaternary structure, monomer; maintained as a monomer in an autoinhibited state. Upon binding of viral RNAs and conformational shift, homooligomerizes and forms filaments on these molecules. Interacts (via tandem CARD domain) with MAVS/IPS1 promoting its filamentation. Interacts with DHX58/LGP2, IKBKE, TBK1 and STING1. Interacts (via CARD domain) with TRIM25 (via SPRY domain). Interacts (double-stranded RNA-bound oligomeric form) with RNF135 (homodimer); involved in RNA length-dependent activation of the RIG-I signaling pathway. Interacts with CYLD. Interacts with NLRC5; blocks the interaction of MAVS/IPS1 to RIGI. Interacts with SRC. Interacts with DDX60. Interacts with ZC3HAV1 (via zinc-fingers) in an RNA-dependent manner. Interacts (via tandem CARD domain) with SEC14L1; the interaction is direct and impairs the interaction of RIGI with MAVS/IPS1. Interacts with VCP/p97; interaction is direct and allows the recruitment of RNF125 and subsequent ubiquitination and degradation. Interacts with NOP53; may regulate RIGI through USP15-mediated 'Lys-63'-linked deubiquitination. Interacts with SIGLEC10, CBL and PTPN11; within a negative feedback loop leading to RIGI degradation. Interacts with LRRC25. Interacts with ZCCHC3; leading to activation of RIGI. Interacts with RNF123. Interacts with UBE2D3 and UBE2N; E2 ubiquitin ligases involved in RNF135-mediated ubiquitination of RIGI and activation of the RIG-I signaling pathway. Interacts with IFIT3. Interacts with DDX3X. Interacts with RTN3. Interacts with ARL16; this interaction is GTP-dependent and induced upon viral infection; this interaction suppresses the RNA sensing activity of RIGI. Interacts with DHX16; this interaction enhances RIGI-mediated antiviral response. Interacts with IRGM; promoting RIGI degradation. Interacts with IFI6; this interaction inhibits RIGI activation. Interacts with ECSIT; this interaction bridges RIGI to the MAVS complex at the mitochondrion. Interacts with YWHAE; this interaction drives RIGI at the mitochondrion. Phosphorylated in resting cells and dephosphorylated in RNA virus-infected cells. Phosphorylation at Thr-773 results in inhibition of its activity while dephosphorylation at these sites results in its activation. In terms of processing, ISGylated. Conjugated to ubiquitin-like protein ISG15 upon IFN-beta stimulation. ISGylation negatively regulates its function in antiviral signaling response. Post-translationally, sumoylated, probably by MUL1; inhibiting its polyubiquitination. Acetylated in response to RNA virus infection. Deacetylated by HDAC6 in the presence of viral mRNAs which is required for detection of viral RNA by RIGI. In terms of processing, ubiquitinated. 'Lys-63' ubiquitination by RNF135, which occurs after RNA-binding and homodimerization, releases the autoinhibition of the CARD domains by the RLR CTR domain, an essential step in the activation of the RIG-I signaling pathway. Also ubiquitinated by TRIM4. Also undergoes 'Lys-48' ubiquitination by RNF125 that leads to proteasomal degradation. 'Lys-48' ubiquitination follows viral infection and is enhanced by 'Lys-63'-linked ubiquitination of the CARD domains that promotes interaction with VCP/p97 and subsequent recruitment of RNF125. Within a negative feedback loop involving SIGLEC10 and PTPN11, 'Lys-48' ubiquitination at Lys-815 by CBL also elicits the proteasomal degradation of RIGI. Deubiquitinated by CYLD, a protease that selectively cleaves 'Lys-63'-linked ubiquitin chains. Also probably deubiquitinated by USP17L2/USP17 that cleaves 'Lys-48'- and 'Lys-63'-linked ubiquitin chains and positively regulates the receptor. Ubiquitinated by TRIM40 via 'Lys-48'-linked ubiquitination; leading to proteasomal degradation. Deubiquitinated by USP27X that cleaves 'Lys-63'-linked ubiquitin chains and inhibits the innate immune receptor activity. Deubiquitinated by USP3 that also cleaves 'Lys-63'-linked ubiquitin chains and inhibits the innate immune receptor activity. Post-translationally, degraded via selective autophagy following interaction with IRGM. IRGM promotes RIGI recruitment to autophagosome membranes, promoting its SQSTM1/p62-dependent autophagic degradation. Ubiquitously expressed, with highest levels in spleen, liver, intestine and heart. Up-regulated in tracheobronchial lymph node and tonsils during porcine reproductive and respiratory syndrome virus (PRRSV) infection.

It localises to the cytoplasm. The protein resides in the cell projection. The protein localises to the ruffle membrane. Its subcellular location is the cytoskeleton. It is found in the cell junction. It localises to the tight junction. It catalyses the reaction ATP + H2O = ADP + phosphate + H(+). Its function is as follows. Innate immune receptor that senses cytoplasmic viral nucleic acids and activates a downstream signaling cascade leading to the production of type I interferons and pro-inflammatory cytokines. Forms a ribonucleoprotein complex with viral RNAs on which it homooligomerizes to form filaments. The homooligomerization allows the recruitment of RNF135 an E3 ubiquitin-protein ligase that activates and amplifies the RIG-I-mediated antiviral signaling in an RNA length-dependent manner through ubiquitination-dependent and -independent mechanisms. Upon activation, associates with mitochondria antiviral signaling protein (MAVS/IPS1) that activates the IKK-related kinases TBK1 and IKBKE which in turn phosphorylate the interferon regulatory factors IRF3 and IRF7, activating transcription of antiviral immunological genes including the IFN-alpha and IFN-beta interferons. Ligands include: 5'-triphosphorylated ssRNA and dsRNA and short dsRNA (&lt;1 kb in length). In addition to the 5'-triphosphate moiety, blunt-end base pairing at the 5'-end of the RNA is very essential. Overhangs at the non-triphosphorylated end of the dsRNA RNA have no major impact on its activity. A 3'overhang at the 5'triphosphate end decreases and any 5'overhang at the 5' triphosphate end abolishes its activity. Detects both positive and negative strand RNA viruses including members of the families Paramyxoviridae, Rhabdoviridae: vesicular stomatitis virus (VSV) Orthomyxoviridae: influenza A and B virus, Flaviviridae: Japanese encephalitis virus (JEV). It also detects rotavirus and reovirus. Also involved in antiviral signaling in response to viruses containing a dsDNA genome. Detects dsRNA produced from non-self dsDNA by RNA polymerase III. May play important roles in granulocyte production and differentiation, bacterial phagocytosis and in the regulation of cell migration. The chain is Antiviral innate immune response receptor RIG-I from Sus scrofa (Pig).